The chain runs to 180 residues: NADH-quinone oxidoreductase subunit I (180 aa).

4Fe-4S ferredoxin-type domains lie at 48–80 (IVLT…LQKA) and 90–119 (EFFR…LTPD). [4Fe-4S] cluster is bound by residues C60, C63, C66, C70, C99, C102, C105, and C109. Positions 161–174 (KPKGDAEHEAKPID) are enriched in basic and acidic residues. A disordered region spans residues 161–180 (KPKGDAEHEAKPIDVKSLLP).

This sequence belongs to the complex I 23 kDa subunit family. As to quaternary structure, NDH-1 is composed of 14 different subunits. Subunits NuoA, H, J, K, L, M, N constitute the membrane sector of the complex. [4Fe-4S] cluster serves as cofactor.

It localises to the cell inner membrane. The enzyme catalyses a quinone + NADH + 5 H(+)(in) = a quinol + NAD(+) + 4 H(+)(out). NDH-1 shuttles electrons from NADH, via FMN and iron-sulfur (Fe-S) centers, to quinones in the respiratory chain. The immediate electron acceptor for the enzyme in this species is believed to be ubiquinone. Couples the redox reaction to proton translocation (for every two electrons transferred, four hydrogen ions are translocated across the cytoplasmic membrane), and thus conserves the redox energy in a proton gradient. In Aeromonas salmonicida (strain A449), this protein is NADH-quinone oxidoreductase subunit I.